The primary structure comprises 68 residues: U-poneritoxin(01)-Om4b (68 aa).

The N-terminal stretch at 1-25 (MKPSGLTLAFLVVFMMAIMYNSVQA) is a signal peptide. Residues 26 to 39 (EALADADAEAFAEA) constitute a propeptide that is removed on maturation.

Belongs to the formicidae venom precursor-01 superfamily. Homo- or heterodimer with PLP4 (AC A0A348G5W0); disulfide-linked. Truncated sequences of this peptide have also been found in the venom. It is possible they have been cleaved in the venom. In terms of tissue distribution, expressed by the venom gland.

Its subcellular location is the secreted. In terms of biological role, this homodimer composed of two cationic amphipathic alpha-helical peptides has antimicrobial activities against E.coli, S.aureus (MIC=3.1 uM), and S.cerevisiae (MIC=3.1 uM). It also shows histamine-releasing activity (66.4% at 10 uM) and a weak hemolytic activity (10.5% at 50 uM). The protein is U-poneritoxin(01)-Om4b of Odontomachus monticola (Trap-jaw ant).